Here is a 724-residue protein sequence, read N- to C-terminus: Catalase-peroxidase (724 aa).

Positions 98 to 226 (WHSAGTYRIA…LAAVMMGLIY (129 aa)) form a cross-link, tryptophyl-tyrosyl-methioninium (Trp-Tyr) (with M-252). His-99 serves as the catalytic Proton acceptor. Positions 226 to 252 (YVNPEGVDGNPDPLKTAQDMRVTFARM) form a cross-link, tryptophyl-tyrosyl-methioninium (Tyr-Met) (with W-98). Residue His-267 participates in heme b binding.

It belongs to the peroxidase family. Peroxidase/catalase subfamily. In terms of assembly, homodimer or homotetramer. Heme b is required as a cofactor. Post-translationally, formation of the three residue Trp-Tyr-Met cross-link is important for the catalase, but not the peroxidase activity of the enzyme.

The catalysed reaction is H2O2 + AH2 = A + 2 H2O. It catalyses the reaction 2 H2O2 = O2 + 2 H2O. Its function is as follows. Bifunctional enzyme with both catalase and broad-spectrum peroxidase activity. This chain is Catalase-peroxidase, found in Vibrio cholerae serotype O1 (strain ATCC 39315 / El Tor Inaba N16961).